Consider the following 428-residue polypeptide: UPF0229 protein YeaH (428 aa).

Basic and acidic residues predominate over residues 78 to 90; sequence GNDHFIQNDRIER. Positions 78–111 are disordered; it reads GNDHFIQNDRIERPQGGGGGGSGSGQGQASQDGE. The span at 92–103 shows a compositional bias: gly residues; it reads QGGGGGGSGSGQ.

It belongs to the UPF0229 family.

The chain is UPF0229 protein YeaH from Salmonella paratyphi C (strain RKS4594).